The following is a 197-amino-acid chain: Holliday junction branch migration complex subunit RuvA (197 aa).

Residues 1-64 are domain I; sequence MIASVRGTLI…EDALTLYGFK (64 aa). The domain II stretch occupies residues 65 to 145; the sequence is TVEQRQLFET…GLPVAPGVSP (81 aa). A flexible linker region spans residues 146–153; sequence AVAAVNAE. Positions 153-197 are domain III; sequence ELSEMLVSLGFSSAEASTAIAALPPDAPLDLEERLRLALRYFGAR.

This sequence belongs to the RuvA family. In terms of assembly, homotetramer. Forms an RuvA(8)-RuvB(12)-Holliday junction (HJ) complex. HJ DNA is sandwiched between 2 RuvA tetramers; dsDNA enters through RuvA and exits via RuvB. An RuvB hexamer assembles on each DNA strand where it exits the tetramer. Each RuvB hexamer is contacted by two RuvA subunits (via domain III) on 2 adjacent RuvB subunits; this complex drives branch migration. In the full resolvosome a probable DNA-RuvA(4)-RuvB(12)-RuvC(2) complex forms which resolves the HJ.

The protein localises to the cytoplasm. Functionally, the RuvA-RuvB-RuvC complex processes Holliday junction (HJ) DNA during genetic recombination and DNA repair, while the RuvA-RuvB complex plays an important role in the rescue of blocked DNA replication forks via replication fork reversal (RFR). RuvA specifically binds to HJ cruciform DNA, conferring on it an open structure. The RuvB hexamer acts as an ATP-dependent pump, pulling dsDNA into and through the RuvAB complex. HJ branch migration allows RuvC to scan DNA until it finds its consensus sequence, where it cleaves and resolves the cruciform DNA. The sequence is that of Holliday junction branch migration complex subunit RuvA from Roseiflexus castenholzii (strain DSM 13941 / HLO8).